We begin with the raw amino-acid sequence, 436 residues long: Putative ankyrin repeat protein FPV026 (436 aa).

6 ANK repeats span residues 63–92, 101–130, 135–164, 168–197, 201–230, and 234–266; these read EGIRVLRMAIKFERIDIIKILLEYGVNVNE, TCYSVLHFAVDIGNKDIVSILLYAGADVNN, LRNTPLHLAIQQKNTDIAKLLLDSGADQNI, NGNIPIQIAVTYNDEKMVNILLQYSPNLEI, NGRTVLHNAVLDKNINIVSLLLENGALVDS, and EGYTILLSSVNRTDPFIIKMLLHRGANPFFLNI. Residues 409–436 form the F-box domain; sequence TSTITNLPYEVIYIIVEKMTNKELCEIR.

The sequence is that of Putative ankyrin repeat protein FPV026 from Fowlpox virus (strain NVSL) (FPV).